We begin with the raw amino-acid sequence, 155 residues long: Small ribosomal subunit protein uS7c (155 aa).

The protein belongs to the universal ribosomal protein uS7 family. Part of the 30S ribosomal subunit.

Its subcellular location is the plastid. The protein resides in the chloroplast. In terms of biological role, one of the primary rRNA binding proteins, it binds directly to 16S rRNA where it nucleates assembly of the head domain of the 30S subunit. The sequence is that of Small ribosomal subunit protein uS7c (rps7) from Yucca glauca (Soapweed yucca).